The sequence spans 1420 residues: DNA-directed RNA polymerase subunit beta' (1420 aa).

Zn(2+)-binding residues include C70, C72, C85, and C88. D464, D466, and D468 together coordinate Mg(2+). 4 residues coordinate Zn(2+): C823, C897, C904, and C907.

The protein belongs to the RNA polymerase beta' chain family. As to quaternary structure, the RNAP catalytic core consists of 2 alpha, 1 beta, 1 beta' and 1 omega subunit. When a sigma factor is associated with the core the holoenzyme is formed, which can initiate transcription. Requires Mg(2+) as cofactor. The cofactor is Zn(2+).

The enzyme catalyses RNA(n) + a ribonucleoside 5'-triphosphate = RNA(n+1) + diphosphate. Functionally, DNA-dependent RNA polymerase catalyzes the transcription of DNA into RNA using the four ribonucleoside triphosphates as substrates. The polypeptide is DNA-directed RNA polymerase subunit beta' (Polynucleobacter asymbioticus (strain DSM 18221 / CIP 109841 / QLW-P1DMWA-1) (Polynucleobacter necessarius subsp. asymbioticus)).